Here is a 278-residue protein sequence, read N- to C-terminus: MRHDGPMHVQPGVGLQSDTSSSTGTGSGPADEPEAEKSAWGYLPPTAFRSRHSALSSIQQQTWERRWPQLGRQATAHSQPSARGHEPIDPIDARAWFGREAPVVLEIGCGSGTSTLAMAQAEPNVDVIAVEVYRRGLAQLLCAIDRADLQRINIRLIRGNGIDVLRDLIAPESLTGVRVFFPDPWPKARHHKRRLIQPSTVVLIADRLLPGGVFHAATDHPGYAEHIIAAGDAEPALARVDPGVDSLPVSVVRPTTKYEMKAHNAGSSINELIWKKQR.

Residues 1 to 42 (MRHDGPMHVQPGVGLQSDTSSSTGTGSGPADEPEAEKSAWGY) are disordered. S-adenosyl-L-methionine contacts are provided by E106, E131, N160, and D183. D183 is an active-site residue. Substrate contacts are provided by residues K187, D219, and 256 to 259 (TKYE).

This sequence belongs to the class I-like SAM-binding methyltransferase superfamily. TrmB family.

It catalyses the reaction guanosine(46) in tRNA + S-adenosyl-L-methionine = N(7)-methylguanosine(46) in tRNA + S-adenosyl-L-homocysteine. The protein operates within tRNA modification; N(7)-methylguanine-tRNA biosynthesis. Functionally, catalyzes the formation of N(7)-methylguanine at position 46 (m7G46) in tRNA. This is tRNA (guanine-N(7)-)-methyltransferase from Mycobacterium ulcerans (strain Agy99).